The following is a 712-amino-acid chain: Polyribonucleotide nucleotidyltransferase (712 aa).

Residues D487 and D493 each contribute to the Mg(2+) site. The 60-residue stretch at 554–613 folds into the KH domain; the sequence is PKIITMTINPDKIRDVIGPSGKQINKIIEETGVKIDIEQDGTVFISSINQEMNDKAKKII. The S1 motif domain maps to 623 to 691; sequence GEIYEGKVKR…KQGRVNLSRK (69 aa).

It belongs to the polyribonucleotide nucleotidyltransferase family. Mg(2+) is required as a cofactor.

Its subcellular location is the cytoplasm. The catalysed reaction is RNA(n+1) + phosphate = RNA(n) + a ribonucleoside 5'-diphosphate. Its function is as follows. Involved in mRNA degradation. Catalyzes the phosphorolysis of single-stranded polyribonucleotides processively in the 3'- to 5'-direction. The sequence is that of Polyribonucleotide nucleotidyltransferase from Bacillus cereus (strain G9842).